The chain runs to 546 residues: Putative serine hydroxymethyltransferase, mitochondrial (546 aa).

The transit peptide at 1–64 (MSSFQSTAAV…RFSSSSIAND (64 aa)) directs the protein to the mitochondrion. N6-(pyridoxal phosphate)lysine is present on Lys305.

The protein belongs to the SHMT family. In terms of assembly, homotetramer. The cofactor is pyridoxal 5'-phosphate.

The protein localises to the mitochondrion. The catalysed reaction is (6R)-5,10-methylene-5,6,7,8-tetrahydrofolate + glycine + H2O = (6S)-5,6,7,8-tetrahydrofolate + L-serine. The protein operates within one-carbon metabolism; tetrahydrofolate interconversion. In terms of biological role, interconversion of serine and glycine. This Neurospora crassa (strain ATCC 24698 / 74-OR23-1A / CBS 708.71 / DSM 1257 / FGSC 987) protein is Putative serine hydroxymethyltransferase, mitochondrial (cbs-2).